Here is a 265-residue protein sequence, read N- to C-terminus: Ni-sirohydrochlorin a,c-diamide reductive cyclase complex, component CfbC (265 aa).

The protein belongs to the NifH/BchL/ChlL family. In terms of assembly, homodimer. The Ni-sirohydrochlorin a,c-diamide reductive cyclase complex is composed of a NifH homolog component CfbC and a NifD homolog component CfbD. It depends on [4Fe-4S] cluster as a cofactor.

It catalyses the reaction Ni-sirohydrochlorin a,c-diamide + 3 AH2 + ATP + H2O = 15,17(3)-seco-F430-17(3)-acid + 3 A + ADP + phosphate. Its function is as follows. Involved in the biosynthesis of the unique nickel-containing tetrapyrrole coenzyme F430, the prosthetic group of methyl-coenzyme M reductase (MCR), which plays a key role in methanogenesis and anaerobic methane oxidation. Catalyzes both the six-electron reduction of the tetrahydroporphyrin ring system and the gamma-lactamization of the c-acetamide side chain of Ni-sirohydrochlorin a,c-diamide to yield 15,17(3)-seco-F430-17(3)-acid (seco-F430), the last intermediate in the biosynthesis of the coenzyme F430. This is Ni-sirohydrochlorin a,c-diamide reductive cyclase complex, component CfbC from Methanosarcina barkeri (strain Fusaro / DSM 804).